The chain runs to 293 residues: Protease HtpX (293 aa).

2 helical membrane passes run 4–24 and 38–58; these read IGLFLLTNLAVLVVAGVVLSL and LTNLLIFCAVFGFVGSFISLF. Histidine 145 serves as a coordination point for Zn(2+). Glutamate 146 is a catalytic residue. Histidine 149 is a Zn(2+) binding site. The next 2 membrane-spanning stretches (helical) occupy residues 156–176 and 193–213; these read ITLSLIQGVVNTFVMFFARII and IAFFITTIVAELVLGILASMI. Glutamate 222 lines the Zn(2+) pocket.

This sequence belongs to the peptidase M48B family. Zn(2+) serves as cofactor.

Its subcellular location is the cell inner membrane. The polypeptide is Protease HtpX (Cellvibrio japonicus (strain Ueda107) (Pseudomonas fluorescens subsp. cellulosa)).